The primary structure comprises 193 residues: Mesogenin-1 (193 aa).

A disordered region spans residues 34-59; that stretch reads GPFELNQASPSQSLSPAPSLESYSSS. Residues 40-59 are compositionally biased toward low complexity; it reads QASPSQSLSPAPSLESYSSS. In terms of domain architecture, bHLH spans 124 to 178; it reads QRRRKASEREKLRMRTLADALHTLRNYLPPVYSQRGQPLTKIQTLKYTIKYIGEL.

It is found in the nucleus. In terms of biological role, involved in specifying the paraxial, but not dorsal, mesoderm. May regulate the expression of T-box transcription factors required for mesoderm formation and differentiation. In Homo sapiens (Human), this protein is Mesogenin-1 (MSGN1).